The chain runs to 1140 residues: Protein FAM184A (1140 aa).

3 coiled-coil regions span residues alanine 57–glutamine 256, alanine 296–glutamate 800, and arginine 868–lysine 907. Residues proline 1063–proline 1128 are disordered.

This sequence belongs to the FAM184 family.

Its subcellular location is the cytoplasm. The protein resides in the P-body. It localises to the cytoskeleton. The protein localises to the microtubule organizing center. It is found in the centrosome. Its subcellular location is the centriolar satellite. This chain is Protein FAM184A, found in Homo sapiens (Human).